A 1907-amino-acid chain; its full sequence is MAPEPAPGRTMVPLVPALVMLGLVAGAHGDSKPVFIKVPEDQTGLSGGVASFVCQATGEPKPRITWMKKGKKVSSQRFEVIEFDDGAGSVLRIQPLRVQRDEAIYECTATNSLGEINTSAKLSVLEEEQLPPGFPSIDMGPQLKVVEKARTATMLCAAGGNPDPEISWFKDFLPVDPATSNGRIKQLRSGALQIESSEESDQGKYECVATNSAGTRYSAPANLYVRVRRVAPRFSIPPSSQEVMPGGSVNLTCVAVGAPMPYVKWMMGAEELTKEDEMPVGRNVLELSNVVRSANYTCVAISSLGMIEATAQVTVKALPKPPIDLVVTETTATSVTLTWDSGNSEPVTYYGIQYRAAGTEGPFQEVDGVATTRYSIGGLSPFSEYAFRVLAVNSIGRGPPSEAVRARTGEQAPSSPPRRVQARMLSASTMLVQWEPPEEPNGLVRGYRVYYTPDSRRPPNAWHKHNTDAGLLTTVGSLLPGITYSLRVLAFTAVGDGPPSPTIQVKTQQGVPAQPADFQAEVESDTRIQLSWLLPPQERIIMYELVYWAAEDEDQQHKVTFDPTSSYTLEDLKPDTLYRFQLAARSDMGVGVFTPTIEARTAQSTPSAPPQKVMCVSMGSTTVRVSWVPPPADSRNGVITQYSVAYEAVDGEDRGRHVVDGISREHSSWDLVGLEKWTEYRVWVRAHTDVGPGPESSPVLVRTDEDVPSGPPRKVEVEPLNSTAVHVYWKLPVPSKQHGQIRGYQVTYVRLENGEPRGLPIIQDVMLAEAQWRPEESEDYETTISGLTPETTYSVTVAAYTTKGDGARSKPKIVTTTGAVPGRPTMMISTTAMNTALLQWHPPKELPGELLGYRLQYCRADEARPNTIDFGKDDQHFTVTGLHKGTTYIFRLAAKNRAGLGEEFEKEIRTPEDLPSGFPQNLHVTGLTTSTTELAWDPPVLAERNGRIISYTVVFRDINSQQELQNITTDTRFTLTGLKPDTTYDIKVRAWTSKGSGPLSPSIQSRTMPVEQVFAKNFRVAAAMKTSVLLSWEVPDSYKSAVPFKILYNGQSVEVDGHSMRKLIADLQPNTEYSFVLMNRGSSAGGLQHLVSIRTAPDLLPHKPLPASAYIEDGRFDLSMPHVQDPSLVRWFYIVVVPIDRVGGSMLTPRWSTPEELELDELLEAIEQGGEEQRRRRRQAERLKPYVAAQLDVLPETFTLGDKKNYRGFYNRPLSPDLSYQCFVLASLKEPMDQKRYASSPYSDEIVVQVTPAQQQEEPEMLWVTGPVLAVILIILIVIAILLFKRKRTHSPSSKDEQSIGLKDSLLAHSSDPVEMRRLNYQTPGMRDHPPIPITDLADNIERLKANDGLKFSQEYESIDPGQQFTWENSNLEVNKPKNRYANVIAYDHSRVILTSIDGVPGSDYINANYIDGYRKQNAYIATQGPLPETMGDFWRMVWEQRTATVVMMTRLEEKSRVKCDQYWPARGTETCGLIQVTLLDTVELATYTVRTFALHKSGSSEKRELRQFQFMAWPDHGVPEYPTPILAFLRRVKACNPLDAGPMVVHCSAGVGRTGCFIVIDAMLERMKHEKTVDIYGHVTCMRSQRNYMVQTEDQYVFIHEALLEAATCGHTEVPARNLYAHIQKLGQVPPGESVTAMELEFKLLASSKAHTSRFISANLPCNKFKNRLVNIMPYELTRVCLQPIRGVEGSDYINASFLDGYRQQKAYIATQGPLAESTEDFWRMLWEHNSTIIVMLTKLREMGREKCHQYWPAERSARYQYFVVDPMAEYNMPQYILREFKVTDARDGQSRTIRQFQFTDWPEQGVPKTGEGFIDFIGQVHKTKEQFGQDGPITVHCSAGVGRTGVFITLSIVLERMRYEGVVDMFQTVKTLRTQRPAMVQTEDQYQLCYRAALEYLGSFDHYAT.

Residues methionine 1 to glycine 29 form the signal peptide. Over aspartate 30–tryptophan 1263 the chain is Extracellular. 3 Ig-like C2-type domains span residues proline 33–serine 123, proline 135–tyrosine 224, and proline 232–threonine 314. Cysteine 54 and cysteine 107 are disulfide-bonded. Lysine 68–arginine 77 contacts heparin. N-linked (GlcNAc...) asparagine glycosylation is present at asparagine 117. Cysteine 156 and cysteine 207 are joined by a disulfide. Residues asparagine 250 and asparagine 295 are each glycosylated (N-linked (GlcNAc...) asparagine). The cysteines at positions 253 and 298 are disulfide-linked. 8 Fibronectin type-III domains span residues proline 321–glutamine 411, proline 416–glycine 510, glutamine 514–serine 604, proline 609–aspartate 706, proline 711–alanine 819, valine 820–leucine 914, phenylalanine 918–valine 1010, and phenylalanine 1014–aspartate 1098. The interval glycine 398 to proline 417 is disordered. The segment at glycine 693–proline 712 is disordered. A glycan (N-linked (GlcNAc...) asparagine) is linked at asparagine 721. A glycan (N-linked (GlcNAc...) asparagine) is linked at asparagine 966. Residues valine 1264 to phenylalanine 1284 traverse the membrane as a helical segment. Topologically, residues lysine 1285 to threonine 1907 are cytoplasmic. Serine 1305 is modified (phosphoserine). Tyrosine-protein phosphatase domains are found at residues phenylalanine 1352–alanine 1607 and methionine 1639–tyrosine 1898. Residues aspartate 1516, cysteine 1548 to arginine 1554, and glutamine 1592 contribute to the substrate site. The Phosphocysteine intermediate role is filled by cysteine 1548. The Phosphocysteine intermediate role is filled by cysteine 1839.

This sequence belongs to the protein-tyrosine phosphatase family. Receptor class 2A subfamily. As to quaternary structure, interacts with GRIP1. Interacts with PPFIA1, PPFIA2 and PPFIA3. Interacts with INSR.

It localises to the membrane. It catalyses the reaction O-phospho-L-tyrosyl-[protein] + H2O = L-tyrosyl-[protein] + phosphate. Functionally, possible cell adhesion receptor. It possesses an intrinsic protein tyrosine phosphatase activity (PTPase) and dephosphorylates EPHA2 regulating its activity. Its function is as follows. The first PTPase domain has enzymatic activity, while the second one seems to affect the substrate specificity of the first one. This chain is Receptor-type tyrosine-protein phosphatase F (PTPRF), found in Homo sapiens (Human).